An 86-amino-acid chain; its full sequence is Large ribosomal subunit protein bL27 (86 aa).

This sequence belongs to the bacterial ribosomal protein bL27 family.

In Flavobacterium johnsoniae (strain ATCC 17061 / DSM 2064 / JCM 8514 / BCRC 14874 / CCUG 350202 / NBRC 14942 / NCIMB 11054 / UW101) (Cytophaga johnsonae), this protein is Large ribosomal subunit protein bL27.